The following is a 117-amino-acid chain: UPF0102 protein Clos_1471 (117 aa).

It belongs to the UPF0102 family.

The protein is UPF0102 protein Clos_1471 of Alkaliphilus oremlandii (strain OhILAs) (Clostridium oremlandii (strain OhILAs)).